The following is a 137-amino-acid chain: Large ribosomal subunit protein uL16 (137 aa).

The protein belongs to the universal ribosomal protein uL16 family. In terms of assembly, part of the 50S ribosomal subunit.

Binds 23S rRNA and is also seen to make contacts with the A and possibly P site tRNAs. The sequence is that of Large ribosomal subunit protein uL16 from Rhodopseudomonas palustris (strain ATCC BAA-98 / CGA009).